Here is a 61-residue protein sequence, read N- to C-terminus: Cytotoxin 1 (61 aa).

Cystine bridges form between cysteine 3/cysteine 22, cysteine 15/cysteine 39, cysteine 43/cysteine 54, and cysteine 55/cysteine 60.

The protein belongs to the three-finger toxin family. Short-chain subfamily. Type IB cytotoxin sub-subfamily. Expressed by the venom gland.

The protein resides in the secreted. Its function is as follows. This protein lyses red blood cells and has cardiotoxic and hypotensive activities. The chain is Cytotoxin 1 from Hemachatus haemachatus (Rinkhals).